We begin with the raw amino-acid sequence, 165 residues long: Cathelicidin-7 (165 aa).

Residues 1-29 form the signal peptide; that stretch reads METQRASFSLGRSSLWLLLLGLVVPSASA. Residues 30–130 constitute a propeptide that is removed on maturation; the sequence is QDLSYREAVL…FDITCNNIQS (101 aa). Intrachain disulfides connect C86-C97 and C108-C125. Residue R164 is modified to Arginine amide.

It belongs to the cathelicidin family. In terms of tissue distribution, expressed in bone marrow myeloid cells, spleen and testis.

It is found in the secreted. Exerts a potent antimicrobial activity. This Bos taurus (Bovine) protein is Cathelicidin-7 (CATHL7).